The primary structure comprises 514 residues: ATP synthase subunit alpha (514 aa).

Residue 170 to 177 (GDRQIGKT) participates in ATP binding.

The protein belongs to the ATPase alpha/beta chains family. As to quaternary structure, F-type ATPases have 2 components, CF(1) - the catalytic core - and CF(0) - the membrane proton channel. CF(1) has five subunits: alpha(3), beta(3), gamma(1), delta(1), epsilon(1). CF(0) has three main subunits: a(1), b(2) and c(9-12). The alpha and beta chains form an alternating ring which encloses part of the gamma chain. CF(1) is attached to CF(0) by a central stalk formed by the gamma and epsilon chains, while a peripheral stalk is formed by the delta and b chains.

Its subcellular location is the cell inner membrane. The catalysed reaction is ATP + H2O + 4 H(+)(in) = ADP + phosphate + 5 H(+)(out). Functionally, produces ATP from ADP in the presence of a proton gradient across the membrane. The alpha chain is a regulatory subunit. This is ATP synthase subunit alpha from Pseudomonas syringae pv. tomato (strain ATCC BAA-871 / DC3000).